The chain runs to 562 residues: MNTNEAKEYLARREIPQLFESLLNGLMCSKPEDPVEYLESCLQKVKELGGCDKVKWDTFVSQEKKTLPPLNGGQSRRSFLRNVMPENSNFPYRRYDRLPPIHQFSIESDTDLSETAELIEEYEVFDPTRPRPKIILVIGGPGSGKGTQSLKIAERYGFQYISVGELLRKKIHSTSSNRKWSLIAKIITTGELAPQETTITEIKQKLMQMPDEVGIVIDGFPRDVAQALSFEDQICTPDLVVFLACTNQRLKERLLKRAEQQGRPDDNLKATQRRLMNFKQNAAPLVKYFQEKGLIMTFDADRDEDEVFYDISMAVDSKLFPNKEAAAGSSDLDPSMMLDTGEVIDTGSDYEDQGDDQLNVFGEDTMGGFMEDLKKCKIIFMIGGPGSGKGTQCGKLAEKYGFTHLSTDELLQNELSSESGRSKLIRDIMERGELVPSGIILELLKEAMVASLSNTKGFLIDGYPREVKQGEEFGRRIGDPHLVICMDCSADTMTNRLLQRSRNSPQADDNTTTIAKRLETYYRASIPVVAYYETKTQLHKINAEGTPEEVFLQLCTAIDSIF.

2 adenylate kinase regions span residues 133 to 316 and 377 to 559; these read KIIL…MAVD and KIIF…TAID. 142–147 is a binding site for ATP; the sequence is GSGKGT. Residues 162 to 193 form an NMP 1 region; that stretch reads SVGELLRKKIHSTSSNRKWSLIAKIITTGELA. Residues Arg-168, 191–193, 219–222, and Gln-226 each bind AMP; these read ELA and GFPR. The tract at residues 256 to 266 is LID 1; it reads KRAEQQGRPDD. Residue Arg-257 coordinates ATP. Residues Arg-263 and Arg-274 each coordinate AMP. 386–391 is an ATP binding site; sequence GSGKGT. Residues 406-435 form an NMP 2 region; it reads STDELLQNELSSESGRSKLIRDIMERGELV. AMP is bound by residues Thr-407, 433-435, 462-465, and Gln-469; these read ELV and GYPR. The LID 2 stretch occupies residues 499 to 509; the sequence is QRSRNSPQADD. Position 500 (Arg-500) interacts with ATP. Arg-517 contributes to the AMP binding site. ATP is bound at residue Gly-545.

The protein belongs to the adenylate kinase family. As to quaternary structure, monomer.

The protein localises to the cytoplasm. The catalysed reaction is AMP + ATP = 2 ADP. The enzyme catalyses a 2'-deoxyribonucleoside 5'-diphosphate + ATP = a 2'-deoxyribonucleoside 5'-triphosphate + ADP. It catalyses the reaction a ribonucleoside 5'-diphosphate + ATP = a ribonucleoside 5'-triphosphate + ADP. Nucleoside monophosphate (NMP) kinase that catalyzes the reversible transfer of the terminal phosphate group between nucleoside triphosphates and monophosphates. Active on AMP and dAMP with ATP as a donor. When GTP is used as phosphate donor, the enzyme phosphorylates AMP, CMP, and to a small extent dCMP. Also displays broad nucleoside diphosphate kinase activity. This Bos taurus (Bovine) protein is Adenylate kinase isoenzyme 5 (Ak5).